A 352-amino-acid chain; its full sequence is D-arabitol-phosphate dehydrogenase (352 aa).

Mn(2+) is bound by residues cysteine 43, histidine 65, cysteine 96, cysteine 99, cysteine 102, cysteine 110, and glutamate 151.

This sequence belongs to the zinc-containing alcohol dehydrogenase family. As to quaternary structure, homotetramer. It depends on Mn(2+) as a cofactor.

It carries out the reaction D-arabinitol 1-phosphate + NAD(+) = D-xylulose 5-phosphate + NADH + H(+). Its activity is regulated as follows. Inhibited by EDTA, 4-hydroxymercuribenzoic acid (PHMB), mercury and zinc ions at a concentration of 2 mM. Functionally, involved in the arabitol catabolism via the arabitol phosphate route. Catalyzes only the transformation of D-arabitol 1-phosphate (Arb1P) and D-arabitol 5-phosphate (Arb5P) into D-xylulose 5-phosphate (Xlu5P) and ribulose 5-phosphate, respectively. It can use both NAD and NADP. The sequence is that of D-arabitol-phosphate dehydrogenase from Enterococcus avium (Streptococcus avium).